Here is a 229-residue protein sequence, read N- to C-terminus: Homeobox-leucine zipper protein HOX3 (229 aa).

Positions 1 to 82 (MMGATSPSGL…GPHRPKKLRL (82 aa)) are disordered. Residues 52 to 68 (GEEEEFPMGSVEEDEEE) show a composition bias toward acidic residues. The segment at residues 75–134 (HRPKKLRLSKEQSRLLEESFRLNHTLTPKQKEALAIKLKLRPRQVEVWFQNRRARTKLKQ) is a DNA-binding region (homeobox). The interval 133 to 177 (KQTEMECEYLKRCFGSLTEENRRLQREVEELRAMRVAPPTVLSPH) is leucine-zipper. Residues 198-229 (AATGPPAVRPPPSSAAAAAPSPFHPRRPSAAF) form a disordered region.

It belongs to the HD-ZIP homeobox family. Class II subfamily. In terms of assembly, homodimer. May form a heterodimer with HOX1, HOX2 or HOX7. As to expression, expressed in seedlings, roots, leaves, nodes, internodes, flowers and embryo.

It localises to the nucleus. Its function is as follows. Probable transcription repressor that binds to the DNA sequence 5'-CAAT[GC]ATTG-3'. The chain is Homeobox-leucine zipper protein HOX3 (HOX3) from Oryza sativa subsp. indica (Rice).